We begin with the raw amino-acid sequence, 325 residues long: MMPNVAPNSYYLNIPNANSTSTTTSSIFSDLNKEYESKIKEIEEYYIKTLLNENTDNDDSSSSEGHNINETDILSEYSPRPSPWLPSKPNCYHPLGDFKDLIISDSRPTNTLPINNPFAGNNNISTLATTEKKRKKRSLEVEINPTYTTSAFSLPLTAENLQKLSQVDSQSTGLPYTLPIQKTTKLEPCRRAPLQLPQLVNKTLYKTELCESFTIKGYCKYGNKCQFAHGLNELKFKKKSNNYRTKPCINWSKLGYCPYGKRCCFKHGDDKDVEIYQNANDGRSKDTALTPLPTSLAPSNNDNITNLSKPRNLHTSVKALQRMTW.

2 consecutive C3H1-type zinc fingers follow at residues 204 to 232 (LYKT…HGLN) and 242 to 270 (NYRT…HGDD). The segment at 284–306 (SKDTALTPLPTSLAPSNNDNITN) is disordered. The span at 292-306 (LPTSLAPSNNDNITN) shows a compositional bias: polar residues.

Functionally, binds to specific AU-rich elements (ARE) in the 3'-untranslated region of target mRNAs and promotes their degradation. In response to iron deficiency, promotes the decay of many mRNAs encoding proteins involved in iron-dependent pathways. Negatively regulates primarily iron-dependent mitochondrial processes including respiration and amino acid biosynthesis. This chain is mRNA decay factor CTH1 (CTH1), found in Saccharomyces cerevisiae (strain ATCC 204508 / S288c) (Baker's yeast).